A 317-amino-acid polypeptide reads, in one-letter code: Acetyl-coenzyme A carboxylase carboxyl transferase subunit alpha (317 aa).

The region spanning 40–294 is the CoA carboxyltransferase C-terminal domain; the sequence is RLQKKSEELT…KARLLTDLED (255 aa).

Belongs to the AccA family. In terms of assembly, acetyl-CoA carboxylase is a heterohexamer composed of biotin carboxyl carrier protein (AccB), biotin carboxylase (AccC) and two subunits each of ACCase subunit alpha (AccA) and ACCase subunit beta (AccD).

It localises to the cytoplasm. It catalyses the reaction N(6)-carboxybiotinyl-L-lysyl-[protein] + acetyl-CoA = N(6)-biotinyl-L-lysyl-[protein] + malonyl-CoA. It functions in the pathway lipid metabolism; malonyl-CoA biosynthesis; malonyl-CoA from acetyl-CoA: step 1/1. Its function is as follows. Component of the acetyl coenzyme A carboxylase (ACC) complex. First, biotin carboxylase catalyzes the carboxylation of biotin on its carrier protein (BCCP) and then the CO(2) group is transferred by the carboxyltransferase to acetyl-CoA to form malonyl-CoA. The polypeptide is Acetyl-coenzyme A carboxylase carboxyl transferase subunit alpha (Actinobacillus succinogenes (strain ATCC 55618 / DSM 22257 / CCUG 43843 / 130Z)).